Reading from the N-terminus, the 295-residue chain is Ribosomal RNA small subunit methyltransferase A (295 aa).

The S-adenosyl-L-methionine site is built by asparagine 31, leucine 33, glycine 58, glutamate 79, aspartate 104, and asparagine 129.

This sequence belongs to the class I-like SAM-binding methyltransferase superfamily. rRNA adenine N(6)-methyltransferase family. RsmA subfamily.

It is found in the cytoplasm. The enzyme catalyses adenosine(1518)/adenosine(1519) in 16S rRNA + 4 S-adenosyl-L-methionine = N(6)-dimethyladenosine(1518)/N(6)-dimethyladenosine(1519) in 16S rRNA + 4 S-adenosyl-L-homocysteine + 4 H(+). Specifically dimethylates two adjacent adenosines (A1518 and A1519) in the loop of a conserved hairpin near the 3'-end of 16S rRNA in the 30S particle. May play a critical role in biogenesis of 30S subunits. This Enterococcus faecalis (strain ATCC 700802 / V583) protein is Ribosomal RNA small subunit methyltransferase A.